The following is a 35-amino-acid chain: Photosystem II reaction center protein T (35 aa).

A helical transmembrane segment spans residues 3–23 (ALVYTFLLVSTLGIIFFAIFF).

This sequence belongs to the PsbT family. In terms of assembly, PSII is composed of 1 copy each of membrane proteins PsbA, PsbB, PsbC, PsbD, PsbE, PsbF, PsbH, PsbI, PsbJ, PsbK, PsbL, PsbM, PsbT, PsbY, PsbZ, Psb30/Ycf12, at least 3 peripheral proteins of the oxygen-evolving complex and a large number of cofactors. It forms dimeric complexes.

The protein localises to the plastid. The protein resides in the chloroplast thylakoid membrane. In terms of biological role, found at the monomer-monomer interface of the photosystem II (PS II) dimer, plays a role in assembly and dimerization of PSII. PSII is a light-driven water plastoquinone oxidoreductase, using light energy to abstract electrons from H(2)O, generating a proton gradient subsequently used for ATP formation. This Saururus cernuus (Lizard's tail) protein is Photosystem II reaction center protein T.